The primary structure comprises 221 residues: Probable GTP-binding protein EngB (221 aa).

Residues 37 to 219 (QGIEIALAGR…RAAIVKLLRE (183 aa)) form the EngB-type G domain. Residues 45 to 52 (GRSNVGKS), 72 to 76 (GRTQE), 97 to 100 (DMPG), 164 to 167 (TKTD), and 198 to 200 (TSS) each bind GTP. Mg(2+)-binding residues include serine 52 and threonine 74.

It belongs to the TRAFAC class TrmE-Era-EngA-EngB-Septin-like GTPase superfamily. EngB GTPase family. It depends on Mg(2+) as a cofactor.

Its function is as follows. Necessary for normal cell division and for the maintenance of normal septation. This is Probable GTP-binding protein EngB from Afipia carboxidovorans (strain ATCC 49405 / DSM 1227 / KCTC 32145 / OM5) (Oligotropha carboxidovorans).